Here is a 185-residue protein sequence, read N- to C-terminus: Elongation factor P (185 aa).

Belongs to the elongation factor P family.

The protein resides in the cytoplasm. It functions in the pathway protein biosynthesis; polypeptide chain elongation. Functionally, involved in peptide bond synthesis. Stimulates efficient translation and peptide-bond synthesis on native or reconstituted 70S ribosomes in vitro. Probably functions indirectly by altering the affinity of the ribosome for aminoacyl-tRNA, thus increasing their reactivity as acceptors for peptidyl transferase. This Bacillus mycoides (strain KBAB4) (Bacillus weihenstephanensis) protein is Elongation factor P.